Consider the following 614-residue polypeptide: UvrABC system protein C (614 aa).

Positions 26 to 104 (NLPGVYKMLG…IKEYRPPYNV (79 aa)) constitute a GIY-YIG domain. The region spanning 215-250 (SDIHSALIEKMEASAEELDFEKAVFYRDQLSMLREV) is the UVR domain.

It belongs to the UvrC family. As to quaternary structure, interacts with UvrB in an incision complex.

Its subcellular location is the cytoplasm. Functionally, the UvrABC repair system catalyzes the recognition and processing of DNA lesions. UvrC both incises the 5' and 3' sides of the lesion. The N-terminal half is responsible for the 3' incision and the C-terminal half is responsible for the 5' incision. The chain is UvrABC system protein C from Psychrobacter arcticus (strain DSM 17307 / VKM B-2377 / 273-4).